The sequence spans 280 residues: Urease accessory protein UreD (280 aa).

Belongs to the UreD family. In terms of assembly, ureD, UreF and UreG form a complex that acts as a GTP-hydrolysis-dependent molecular chaperone, activating the urease apoprotein by helping to assemble the nickel containing metallocenter of UreC. The UreE protein probably delivers the nickel.

The protein localises to the cytoplasm. Its function is as follows. Required for maturation of urease via the functional incorporation of the urease nickel metallocenter. The polypeptide is Urease accessory protein UreD (Pseudomonas aeruginosa (strain ATCC 15692 / DSM 22644 / CIP 104116 / JCM 14847 / LMG 12228 / 1C / PRS 101 / PAO1)).